The following is a 320-amino-acid chain: Aspartate carbamoyltransferase catalytic subunit (320 aa).

Positions 68 and 69 each coordinate carbamoyl phosphate. Residue Lys96 participates in L-aspartate binding. Carbamoyl phosphate-binding residues include Arg118, His148, and Gln151. 2 residues coordinate L-aspartate: Arg181 and Arg236. The carbamoyl phosphate site is built by Gly277 and Pro278.

It belongs to the aspartate/ornithine carbamoyltransferase superfamily. ATCase family. In terms of assembly, heterododecamer (2C3:3R2) of six catalytic PyrB chains organized as two trimers (C3), and six regulatory PyrI chains organized as three dimers (R2).

The catalysed reaction is carbamoyl phosphate + L-aspartate = N-carbamoyl-L-aspartate + phosphate + H(+). The protein operates within pyrimidine metabolism; UMP biosynthesis via de novo pathway; (S)-dihydroorotate from bicarbonate: step 2/3. In terms of biological role, catalyzes the condensation of carbamoyl phosphate and aspartate to form carbamoyl aspartate and inorganic phosphate, the committed step in the de novo pyrimidine nucleotide biosynthesis pathway. The protein is Aspartate carbamoyltransferase catalytic subunit of Paracidovorax citrulli (strain AAC00-1) (Acidovorax citrulli).